A 1140-amino-acid chain; its full sequence is uncharacterized protein (1140 aa).

2 consecutive transmembrane segments (helical) span residues 8–28 (FLLF…SAFT) and 1098–1118 (IAIT…SGVV).

This sequence to M.pneumoniae MPN_375 (in the N-terminal section), M.pneumoniae MPN_374 (in the central section) and M.pneumoniae MPN_373 (in the C-terminal section).

It localises to the cell membrane. This is an uncharacterized protein from Mycoplasma pneumoniae (strain ATCC 29342 / M129 / Subtype 1) (Mycoplasmoides pneumoniae).